We begin with the raw amino-acid sequence, 507 residues long: Variant surface glycoprotein ILTAT 1.25 (507 aa).

Residues 1–21 (MQSQQQPVFISIILLAINTDA) form the signal peptide. Over residues 83–95 (EPEAAPKESRSDE) the composition is skewed to basic and acidic residues. Residues 83 to 102 (EPEAAPKESRSDETPEACKA) form a disordered region. N-linked (GlcNAc...) asparagine glycans are attached at residues asparagine 141 and asparagine 371. Residues 384 to 395 (PTKQPPAKAAAA) show a composition bias toward low complexity. Residues 384-474 (PTKQPPAKAA…KKEEECKSPN (91 aa)) are disordered. The segment covering 396–420 (PEKKSNPQKDCNKNTKKRDCKEGDG) has biased composition (basic and acidic residues). The span at 444–455 (SAAGAGDAGASD) shows a compositional bias: low complexity. The segment covering 456–474 (TEAKKCSDKKKEEECKSPN) has biased composition (basic and acidic residues). A lipid anchor (GPI-anchor amidated aspartate) is attached at aspartate 484. A propeptide spans 485 to 507 (SSILANKQFALSVASAAFVALLF) (removed in mature form).

It is found in the cell membrane. Its function is as follows. VSG forms a coat on the surface of the parasite. The trypanosome evades the immune response of the host by expressing a series of antigenically distinct VSGs from an estimated 1000 VSG genes. In Trypanosoma brucei brucei, this protein is Variant surface glycoprotein ILTAT 1.25.